A 165-amino-acid polypeptide reads, in one-letter code: UPF0303 protein Bcep1808_1522 (165 aa).

It belongs to the UPF0303 family.

The protein is UPF0303 protein Bcep1808_1522 of Burkholderia vietnamiensis (strain G4 / LMG 22486) (Burkholderia cepacia (strain R1808)).